The sequence spans 584 residues: POTE ankyrin domain family member D (584 aa).

6 ANK repeats span residues 172 to 201, 205 to 234, 238 to 267, 271 to 300, 304 to 333, and 337 to 366; these read EKRTALHLASANGNSEVVQLLLDRRCQLNV, KKRTALIKAIQCQEDECVLMLLEHGADRNI, YGNTALHYAIYNEDKLMAKALLLYGADIES, CGLTPLLLGVHEQKQQVVKFLIKKKANLNV, YGRTALILAVCCGSASIVNLLLEQNVDVSS, and SGQTAREYAVSSHHHVICELLSDYKEKQML. Residues 369-502 are disordered; sequence SSENSNPEQD…ILTNKQKQIE (134 aa). 3 stretches are compositionally biased toward basic and acidic residues: residues 377 to 392, 401 to 412, and 466 to 481; these read QDLKLTSEEESQRLKV, MSQEPEINKDCD, and EEYHSDEQNDTRKQLS. Polar residues predominate over residues 482 to 498; it reads EEQNTGISQDEILTNKQ. Positions 494-583 form a coiled coil; that stretch reads LTNKQKQIEV…LNEEALTKTN (90 aa).

This sequence belongs to the POTE family. In terms of tissue distribution, expressed in prostate, ovary, testis, placenta and prostate cancer cell lines. Localizes to basal and terminal prostate epithelial cells.

Its subcellular location is the cell membrane. The protein is POTE ankyrin domain family member D (POTED) of Homo sapiens (Human).